Here is a 441-residue protein sequence, read N- to C-terminus: Nucleolar and spindle-associated protein 1 (441 aa).

2 disordered regions span residues 47–186 (ARKG…PNFK) and 216–267 (MNEL…LGLK). Composition is skewed to polar residues over residues 56–74 (ESQTSASSCDETEIQISNQ) and 100–116 (DSQQNHSEIKISNPTEF). Residues 117–126 (QNHEKQESQD) are compositionally biased toward basic and acidic residues. Residue S124 is modified to Phosphoserine; by ATM. S135 carries the phosphoserine modification. The segment covering 152 to 171 (RDSKVPSEGKKSLYTDESSK) has biased composition (basic and acidic residues). Position 182 is a phosphothreonine (T182). Residues 237-382 (GRLSVASTPI…HKGKLKPWGQ (146 aa)) form an interaction with microtubules region. S240 carries the post-translational modification Phosphoserine. Over residues 241-264 (VASTPISQRRSQGRSCGPASQSTL) the composition is skewed to polar residues. Phosphothreonine is present on T244. Phosphoserine is present on residues S247, S255, S269, S276, and S311. The interval 286–319 (AATKDNEHKRSLTKTPARKSAHVTVSGGTPKGEA) is disordered. Phosphothreonine is present on residues T314, T338, and T349. Phosphoserine occurs at positions 352 and 363. The KEN box signature appears at 384–390 (KENNYLN). A disordered region spans residues 401–427 (KTYKQPHLQTKEEQRKKREQERKEKKA). The stretch at 407 to 432 (HLQTKEEQRKKREQERKEKKAKVLGM) forms a coiled coil. Positions 409-424 (QTKEEQRKKREQERKE) are enriched in basic and acidic residues. K411 is modified (N6-acetyllysine).

Belongs to the NUSAP family. As to quaternary structure, interacts with DNA and microtubules. Microtubule bundling is inhibited by IPO7, KPNA2 and KPNB1 while association with DNA is also inhibited by IPO7 and KPNA2. Post-translationally, ubiquitinated. Ubiquitination by FZR1 may lead to proteasome-dependent degradation of this protein. Phosphorylation by ATM in G2/M-phase induces mitotic arrest.

Its subcellular location is the cytoplasm. It localises to the nucleus. The protein localises to the nucleolus. It is found in the cytoskeleton. The protein resides in the spindle. Its subcellular location is the chromosome. Microtubule-associated protein with the capacity to bundle and stabilize microtubules. May associate with chromosomes and promote the organization of mitotic spindle microtubules around them. This is Nucleolar and spindle-associated protein 1 (NUSAP1) from Homo sapiens (Human).